The primary structure comprises 280 residues: Golgi phosphoprotein 3-like B (280 aa).

Residues 1–32 (MTTLIRRGRRAEEGQERRADSEDSIKDKDEED) form a disordered region. The segment covering 10–32 (RAEEGQERRADSEDSIKDKDEED) has biased composition (basic and acidic residues). A 1,2-diacyl-sn-glycero-3-phospho-(1D-myo-inositol 4-phosphate) contacts are provided by W62, R71, R152, and R155. Residues 171–182 (EKQNFLLFDMTT) are beta-hairpin required for oligomerization.

Belongs to the GOLPH3/VPS74 family. In terms of assembly, homooligomer.

Its subcellular location is the golgi apparatus. The protein resides in the golgi stack membrane. It localises to the trans-Golgi network membrane. Its function is as follows. Phosphatidylinositol-4-phosphate-binding protein that may play a role in the process of vesicle budding at the Golgi and anterograde transport to the plasma membrane. The chain is Golgi phosphoprotein 3-like B (golph3l-b) from Xenopus laevis (African clawed frog).